A 239-amino-acid polypeptide reads, in one-letter code: MKSGTLKTKGFKFKQFSIASSNSGMPVSTDGVLLGAWADFHHCQNLLDIGTGTGLLSLMCAQRYVHLSITAVDIDAHAMEAAQENFSHSPWHSRLQLQHGDVLKLNFTHRFDGIICNPPYFNSGEQAQATQRATARHTDTLAHDALLLRCRELLTPNGKANFVLPLTEGEQFLQLAQQQGWHLHRLCRVKPSPNKPVHRLLFELGLSTATTSEEHLTINDGSTYSAAFVKLCQDFYLKM.

The protein belongs to the methyltransferase superfamily. tRNA (adenine-N(6)-)-methyltransferase family.

The protein localises to the cytoplasm. The catalysed reaction is adenosine(37) in tRNA1(Val) + S-adenosyl-L-methionine = N(6)-methyladenosine(37) in tRNA1(Val) + S-adenosyl-L-homocysteine + H(+). Functionally, specifically methylates the adenine in position 37 of tRNA(1)(Val) (anticodon cmo5UAC). The protein is tRNA1(Val) (adenine(37)-N6)-methyltransferase of Vibrio vulnificus (strain CMCP6).